Reading from the N-terminus, the 91-residue chain is Probable Fe(2+)-trafficking protein (91 aa).

This sequence belongs to the Fe(2+)-trafficking protein family.

Could be a mediator in iron transactions between iron acquisition and iron-requiring processes, such as synthesis and/or repair of Fe-S clusters in biosynthetic enzymes. This is Probable Fe(2+)-trafficking protein from Burkholderia cenocepacia (strain ATCC BAA-245 / DSM 16553 / LMG 16656 / NCTC 13227 / J2315 / CF5610) (Burkholderia cepacia (strain J2315)).